Here is a 394-residue protein sequence, read N- to C-terminus: 1-deoxy-D-xylulose 5-phosphate reductoisomerase (394 aa).

NADPH-binding residues include Thr-14, Gly-15, Ser-16, Ile-17, Gly-40, and Asn-128. Lys-129 is a binding site for 1-deoxy-D-xylulose 5-phosphate. Glu-130 is an NADPH binding site. Position 154 (Asp-154) interacts with Mn(2+). Positions 155, 156, 180, and 203 each coordinate 1-deoxy-D-xylulose 5-phosphate. Glu-156 is a Mn(2+) binding site. Gly-209 contacts NADPH. Residues Ser-216, Asn-221, Lys-222, and Glu-225 each contribute to the 1-deoxy-D-xylulose 5-phosphate site. Residue Glu-225 participates in Mn(2+) binding.

It belongs to the DXR family. It depends on Mg(2+) as a cofactor. Requires Mn(2+) as cofactor.

It catalyses the reaction 2-C-methyl-D-erythritol 4-phosphate + NADP(+) = 1-deoxy-D-xylulose 5-phosphate + NADPH + H(+). It participates in isoprenoid biosynthesis; isopentenyl diphosphate biosynthesis via DXP pathway; isopentenyl diphosphate from 1-deoxy-D-xylulose 5-phosphate: step 1/6. Its function is as follows. Catalyzes the NADPH-dependent rearrangement and reduction of 1-deoxy-D-xylulose-5-phosphate (DXP) to 2-C-methyl-D-erythritol 4-phosphate (MEP). The chain is 1-deoxy-D-xylulose 5-phosphate reductoisomerase from Xylella fastidiosa (strain M12).